A 1042-amino-acid polypeptide reads, in one-letter code: Exosome RNA helicase MTR4 (1042 aa).

A2 carries the N-acetylalanine modification. The segment at 16-74 (DSTTAAGTKKDKEKDKGKWKGPPGSADKAGKRFDGKLQSESTNNGKNKRDVDFEGTDEP) is disordered. Positions 23 to 33 (TKKDKEKDKGK) are enriched in basic and acidic residues. K24 participates in a covalent cross-link: Glycyl lysine isopeptide (Lys-Gly) (interchain with G-Cter in SUMO2). At S40 the chain carries Phosphoserine. Positions 43-52 (KAGKRFDGKL) are enriched in basic and acidic residues. K51 and K78 each carry N6-acetyllysine. ATP-binding positions include I139, 161-168 (AHTSAGKT), S164, G166, K167, and T168. In terms of domain architecture, Helicase ATP-binding spans 148–304 (IQCVDNNQSV…WICHLHKQPC (157 aa)). The short motif at 252-255 (DEIH) is the DEIH box element. A Glycyl lysine isopeptide (Lys-Gly) (interchain with G-Cter in SUMO2) cross-link involves residue K358. The region spanning 405 to 577 (QMTKLDFNTD…NMVLNLLRVE (173 aa)) is the Helicase C-terminal domain. Residues K684 and K723 each participate in a glycyl lysine isopeptide (Lys-Gly) (interchain with G-Cter in SUMO2) cross-link.

Belongs to the helicase family. SKI2 subfamily. Component of a TRAMP-like complex, an ATP-dependent exosome regulatory complex consisting of a helicase (MTREX), an oligadenylate polymerase (TENT4B or TENT4A), and a substrate specific RNA-binding factor (ZCCHC7 or ZCCHC8). Several TRAMP-like complexes exist with specific compositions and are associated with nuclear, or nucleolar RNA exosomes. Identified in the spliceosome C complex. Component of the poly(A) tail exosome targeting (PAXT) complex made of PABPN1, ZFC3H1 and MTREX that directs a subset of long and polyadenylated poly(A) RNAs for exosomal degradation. Component of the nuclear exosome targeting (NEXT) complex composed of MTREX, ZCCHC8, and RBM7 that directs a subset of non-coding short-lived RNAs for exosomal degradation. Interacts with ZCCHC8; this interaction bridges the interaction between RBM7 and MTREX. Binds to ZFC3H1 and RBM7 in a RNase-insensitive manner. Interacts with EXOSC10; the interaction mediates the association of MTREX with nuclear RNA exosomes. Interacts with isoform 1 of NVL in an ATP-dependent manner; the interaction is required to associate NVL with nuclear RNA exosome. Interacts with WDR74; the interaction dissociation in a late stage of rRNA synthesis is required for appropriate maturation of pre-60S particles and depends on the ATPase activity of NVL. Interacts with MPHOSPH6. Interacts with the RNA cap-binding complex proteins NCBP1 and SRRT. Interacts with NRDE2; the interaction is direct and negatively regulates MTREX function in exosomal degradation by changing its conformation precluding interaction with ZFC3H1, the RNA cap-binding complex proteins NCBP1 and SRRT, and association with the exosome. Associates with the RNA exosome complex.

It is found in the nucleus. Its subcellular location is the nucleoplasm. The protein localises to the nucleolus. The protein resides in the nucleus speckle. It catalyses the reaction ATP + H2O = ADP + phosphate + H(+). Activated when MTREX is incorporated into NEXT complex an the nuclear RNA exosome complex. Its function is as follows. Catalyzes the ATP-dependent unwinding of RNA duplexes with a single-stranded 3' RNA extension. Central subunit of many protein complexes, namely TRAMP-like, nuclear exosome targeting (NEXT) and poly(A) tail exosome targeting (PAXT). NEXT functions as an RNA exosome cofactor that directs a subset of non-coding short-lived RNAs for exosomal degradation. NEXT is involved in surveillance and turnover of aberrant transcripts and non-coding RNAs. PAXT directs a subset of long and polyadenylated poly(A) RNAs for exosomal degradation. The RNA exosome is fundamental for the degradation of RNA in eukaryotic nuclei. Substrate targeting is facilitated by its cofactor ZCCHC8, which links to RNA-binding protein adapters. Associated with the RNA exosome complex and involved in the 3'-processing of the 7S pre-RNA to the mature 5.8S rRNA. May be involved in pre-mRNA splicing. In the context of NEXT complex can also in vitro unwind DNA:RNA heteroduplexes with a 3' poly (A) RNA tracking strand. Can promote unwinding and degradation of structured RNA substrates when associated with the nuclear exosome and its cofactors. Can displace a DNA strand while translocating on RNA to ultimately degrade the RNA within a DNA/RNA heteroduplex. Plays a role in DNA damage response. This is Exosome RNA helicase MTR4 from Homo sapiens (Human).